The sequence spans 820 residues: Inhibitor of nuclear factor kappa-B kinase epsilon subunit homolog 1 (820 aa).

The 279-residue stretch at 21–299 (LFNDESIGKG…TDIFEFQPVT (279 aa)) folds into the Protein kinase domain. Residues 27-35 (IGKGAYSEV) and K49 contribute to the ATP site. D149 (proton acceptor) is an active-site residue. Residues 758-798 (SPNKEQFPKPEQDSILESSIDEGSTSFESTPPSSPPDVGSN) are disordered.

It belongs to the protein kinase superfamily. Ser/Thr protein kinase family. Interacts with allo-1 (via N-terminus); the interaction is direct. Expressed in oocytes.

It localises to the cytoplasm. It catalyses the reaction L-seryl-[protein] + ATP = O-phospho-L-seryl-[protein] + ADP + H(+). The enzyme catalyses L-threonyl-[protein] + ATP = O-phospho-L-threonyl-[protein] + ADP + H(+). Serine/threonine-protein kinase, which plays a role in regulating allophagy, an autophagic process in which paternal organelles, including mitochondria and membranous organelles, are degraded in embryos. Phosphorylates the allophagy receptor allo-1, which is required for allophagy. The chain is Inhibitor of nuclear factor kappa-B kinase epsilon subunit homolog 1 from Caenorhabditis elegans.